The chain runs to 424 residues: STAM-binding protein (424 aa).

The segment at 1 to 127 (MSDHADVSLP…YEQYKERKKK (127 aa)) is interaction with CHMP3. Residues Ser-2 and Ser-48 each carry the phosphoserine modification. Residues 227-231 (PAKPP) form an interaction with STAM region. Ser-243 carries the phosphoserine modification. One can recognise an MPN domain in the interval 257–388 (IVVPRNLCSE…LTDYGLQEIS (132 aa)). 7 residues coordinate Zn(2+): His-335, His-337, Asp-348, His-350, Cys-390, His-396, and His-398. The JAMM motif motif lies at 335–348 (HTHPTQTAFLSSVD).

This sequence belongs to the peptidase M67C family. As to quaternary structure, interacts with STAM. Interacts with SMAD6 and SMAD7. Interacts with CHMP3; the interaction appears to relieve the autoinhibition of CHMP3. Interacts with SMURF2 and RNF11; this interaction promotes ubiquitination. It depends on Zn(2+) as a cofactor. Post-translationally, phosphorylated after BMP type I receptor activation. In terms of processing, ubiquitinated by SMURF2 in the presence of RNF11.

It localises to the nucleus. It is found in the membrane. The protein localises to the cytoplasm. The protein resides in the early endosome. With respect to regulation, inhibited by N-ethylmaleimide. Zinc metalloprotease that specifically cleaves 'Lys-63'-linked polyubiquitin chains. Does not cleave 'Lys-48'-linked polyubiquitin chains. Plays a role in signal transduction for cell growth and MYC induction mediated by IL-2 and GM-CSF. Potentiates BMP (bone morphogenetic protein) signaling by antagonizing the inhibitory action of SMAD6 and SMAD7. Has a key role in regulation of cell surface receptor-mediated endocytosis and ubiquitin-dependent sorting of receptors to lysosomes. Endosomal localization of STAMBP is required for efficient EGFR degradation but not for its internalization. Involved in the negative regulation of PI3K-AKT-mTOR and RAS-MAP signaling pathways. The protein is STAM-binding protein (Stambp) of Rattus norvegicus (Rat).